A 130-amino-acid chain; its full sequence is Small ribosomal subunit protein uS9 (130 aa).

Belongs to the universal ribosomal protein uS9 family.

This Bacillus thuringiensis subsp. konkukian (strain 97-27) protein is Small ribosomal subunit protein uS9.